Here is a 190-residue protein sequence, read N- to C-terminus: Peptidyl-tRNA hydrolase (190 aa).

Y14 provides a ligand contact to tRNA. H19 (proton acceptor) is an active-site residue. Y64, N66, and N113 together coordinate tRNA.

Belongs to the PTH family. In terms of assembly, monomer.

Its subcellular location is the cytoplasm. The catalysed reaction is an N-acyl-L-alpha-aminoacyl-tRNA + H2O = an N-acyl-L-amino acid + a tRNA + H(+). Functionally, hydrolyzes ribosome-free peptidyl-tRNAs (with 1 or more amino acids incorporated), which drop off the ribosome during protein synthesis, or as a result of ribosome stalling. Catalyzes the release of premature peptidyl moieties from peptidyl-tRNA molecules trapped in stalled 50S ribosomal subunits, and thus maintains levels of free tRNAs and 50S ribosomes. The protein is Peptidyl-tRNA hydrolase of Gemmatimonas aurantiaca (strain DSM 14586 / JCM 11422 / NBRC 100505 / T-27).